The primary structure comprises 589 residues: PAN2-PAN3 deadenylation complex subunit pan3 (589 aa).

The segment at 1–32 (MSVRKNSPASPKPTSRSRESSRSPSVTDLKDH) is disordered. The segment at 34 to 63 (KAKRTLCRNILLYGSCKHSENGCAFRHDGP) adopts a C3H1-type zinc-finger fold. The short motif at 74–94 (YSVKKKLNAASASFQPVRALP) is the PABPC-interacting motif-2 (PAM-2) element. Residues 201 to 457 (EASRQTISAL…NLELFLQNHI (257 aa)) are pseudokinase domain. Residues K255 and 302-309 (DFYPCTTT) contribute to the ATP site. The stretch at 458–496 (ESFFPIMSSPYVECEKMERKISDAFQHGRFFNILCKIMF) forms a coiled coil. Residues 497 to 589 (IIDNNRASRE…DNVYEMEINS (93 aa)) form a knob domain region.

Belongs to the protein kinase superfamily. PAN3 family. As to quaternary structure, homodimer. Forms a heterotrimer with a catalytic subunit pan2 to form the poly(A)-nuclease (PAN) deadenylation complex. Interacts (via PAM-2 motif) with poly(A)-binding protein pab1 (via PABC domain), conferring substrate specificity of the enzyme complex.

It localises to the cytoplasm. It is found in the nucleus. In terms of biological role, regulatory subunit of the poly(A)-nuclease (PAN) deadenylation complex, one of two cytoplasmic mRNA deadenylases involved in mRNA turnover. PAN specifically shortens poly(A) tails of RNA and the activity is stimulated by poly(A)-binding protein pab1. PAN deadenylation is followed by rapid degradation of the shortened mRNA tails by the CCR4-NOT complex. Deadenylated mRNAs are then degraded by two alternative mechanisms, namely exosome-mediated 3'-5' exonucleolytic degradation, or deadenylation-dependent mRNA decaping and subsequent 5'-3' exonucleolytic degradation by xrn1. May also be involved in post-transcriptional maturation of mRNA poly(A) tails. ppk26/pan3 acts as a positive regulator for PAN activity, recruiting the catalytic subunit pan2 to mRNA via its interaction with RNA and with pab1. This is PAN2-PAN3 deadenylation complex subunit pan3 (ppk26) from Schizosaccharomyces pombe (strain 972 / ATCC 24843) (Fission yeast).